Consider the following 259-residue polypeptide: 5'-nucleotidase SurE (259 aa).

Asp11, Asp12, Ser42, and Asn99 together coordinate a divalent metal cation.

The protein belongs to the SurE nucleotidase family. It depends on a divalent metal cation as a cofactor.

The protein resides in the cytoplasm. It carries out the reaction a ribonucleoside 5'-phosphate + H2O = a ribonucleoside + phosphate. In terms of biological role, nucleotidase that shows phosphatase activity on nucleoside 5'-monophosphates. The chain is 5'-nucleotidase SurE from Cytophaga hutchinsonii (strain ATCC 33406 / DSM 1761 / CIP 103989 / NBRC 15051 / NCIMB 9469 / D465).